Reading from the N-terminus, the 156-residue chain is Small ribosomal subunit protein uS7 (156 aa).

It belongs to the universal ribosomal protein uS7 family. As to quaternary structure, part of the 30S ribosomal subunit. Contacts proteins S9 and S11.

One of the primary rRNA binding proteins, it binds directly to 16S rRNA where it nucleates assembly of the head domain of the 30S subunit. Is located at the subunit interface close to the decoding center, probably blocks exit of the E-site tRNA. The polypeptide is Small ribosomal subunit protein uS7 (Brucella melitensis biotype 1 (strain ATCC 23456 / CCUG 17765 / NCTC 10094 / 16M)).